Here is a 161-residue protein sequence, read N- to C-terminus: Thy-1 membrane glycoprotein (161 aa).

Residues 1–19 (MNLAISIALLLTVLQVSRG) form the signal peptide. At Gln20 the chain carries Pyrrolidone carboxylic acid. The Ig-like V-type domain maps to 20-126 (QKVTSLTACL…SQNVTVLRDK (107 aa)). 2 disulfides stabilise this stretch: Cys28/Cys130 and Cys38/Cys104. N-linked (GlcNAc...) asparagine glycosylation is found at Asn42 and Asn79. A Phosphoserine modification is found at Ser82. Asn119 carries an N-linked (GlcNAc...) asparagine glycan. The GPI-anchor amidated cysteine; alternate moiety is linked to residue Cys130. A propeptide spans 131-161 (EGISLLAQNTSWLLLLLLSLSLLQATDFMSL) (removed in mature form). N-linked (GlcNAc...) asparagine glycosylation is present at Asn139.

It localises to the cell membrane. In terms of biological role, may play a role in cell-cell or cell-ligand interactions during synaptogenesis and other events in the brain. This chain is Thy-1 membrane glycoprotein (THY1), found in Homo sapiens (Human).